The following is a 222-amino-acid chain: Putative metal transport protein MJ1569 (222 aa).

6 consecutive transmembrane segments (helical) span residues 3–23, 39–59, 81–101, 102–122, 135–155, and 180–200; these read IPDGYLGPITCAFFYLIMIPI, LPLLGVLTAFSFLVMMFNLPV, WVATIAISIVLIIQAIFFGDG, GITCIGANCFNMGVVLPFVGY, VIASGIGAYVGIVAAAIVAGF, and AFAHLITAGPAAAVVTAIVVW.

The protein belongs to the CbiM family.

It localises to the cell membrane. May be involved in metal transport. In Methanocaldococcus jannaschii (strain ATCC 43067 / DSM 2661 / JAL-1 / JCM 10045 / NBRC 100440) (Methanococcus jannaschii), this protein is Putative metal transport protein MJ1569.